A 425-amino-acid polypeptide reads, in one-letter code: MAGCVSQAAPSEPWLQNVSIVGVKQIDRIVEVVGETLKGNKVRLLTRNRPDAVLSLPKMRKNELIEVLSISTGCLNNCTYCKTKMARGDLVSYPLADLVEQARAAFHDEGVKELWLTSEDLGAWGRDIGLVLPDLLRELVKVIPDGSMMRLGMTNPPYILDHLEEIAEILNHPKVYAFLHIPVQSASDAVLNDMKREYSRRHFEQIADYMIANVPNIYIATDMILAFPTETLEDFEESMELVRKYKFPSLFINQYYPRSGTPAARLKKIDTVEARKRTAAMSELFRSYTRYTDERIGELHRVLVTEVAADKLHGVGHNKSYEQILVPLEYCKMGEWIEVRVTAVTKFSMISKPASIQEDQQPLSLMHLFPLAVFCLVLITLYSVDRFLYPGFFEEWLPFLADAHHDEQQAEMWEHHDNSDPVFYE.

A Radical SAM core domain is found at 60–295 (RKNELIEVLS…RSYTRYTDER (236 aa)). Residues Cys-74, Cys-78, and Cys-81 each contribute to the [4Fe-4S] cluster site. Residues 293-355 (DERIGELHRV…KFSMISKPAS (63 aa)) form the TRAM domain. A helical transmembrane segment spans residues 362–382 (PLSLMHLFPLAVFCLVLITLY).

Belongs to the methylthiotransferase family. CDKAL1 subfamily. Requires [4Fe-4S] cluster as cofactor.

Its subcellular location is the membrane. It carries out the reaction N(6)-L-threonylcarbamoyladenosine(37) in tRNA + (sulfur carrier)-SH + AH2 + 2 S-adenosyl-L-methionine = 2-methylsulfanyl-N(6)-L-threonylcarbamoyladenosine(37) in tRNA + (sulfur carrier)-H + 5'-deoxyadenosine + L-methionine + A + S-adenosyl-L-homocysteine + 2 H(+). Its function is as follows. Catalyzes the methylthiolation of N6-threonylcarbamoyladenosine (t(6)A), leading to the formation of 2-methylthio-N6-threonylcarbamoyladenosine (ms(2)t(6)A) at position 37 in tRNAs that read codons beginning with adenine. This chain is Threonylcarbamoyladenosine tRNA methylthiotransferase, found in Caenorhabditis elegans.